The primary structure comprises 477 residues: Ribulose bisphosphate carboxylase large chain (477 aa).

Positions 1 to 2 are excised as a propeptide; it reads MS. Position 3 is an N-acetylproline (Pro3). Lys14 carries the N6,N6,N6-trimethyllysine modification. Substrate contacts are provided by Asn123 and Thr173. The active-site Proton acceptor is the Lys175. Lys177 contributes to the substrate binding site. Mg(2+)-binding residues include Lys201, Asp203, and Glu204. Lys201 is subject to N6-carboxylysine. The Proton acceptor role is filled by His294. Residues Arg295, His327, and Ser379 each contribute to the substrate site.

It belongs to the RuBisCO large chain family. Type I subfamily. Heterohexadecamer of 8 large chains and 8 small chains; disulfide-linked. The disulfide link is formed within the large subunit homodimers. Mg(2+) is required as a cofactor. The disulfide bond which can form in the large chain dimeric partners within the hexadecamer appears to be associated with oxidative stress and protein turnover.

It is found in the plastid. The protein resides in the chloroplast. The catalysed reaction is 2 (2R)-3-phosphoglycerate + 2 H(+) = D-ribulose 1,5-bisphosphate + CO2 + H2O. The enzyme catalyses D-ribulose 1,5-bisphosphate + O2 = 2-phosphoglycolate + (2R)-3-phosphoglycerate + 2 H(+). RuBisCO catalyzes two reactions: the carboxylation of D-ribulose 1,5-bisphosphate, the primary event in carbon dioxide fixation, as well as the oxidative fragmentation of the pentose substrate in the photorespiration process. Both reactions occur simultaneously and in competition at the same active site. In Dioscorea elephantipes (Elephant's foot yam), this protein is Ribulose bisphosphate carboxylase large chain.